A 402-amino-acid chain; its full sequence is UPF0261 protein mll9388 (402 aa).

It belongs to the UPF0261 family.

This Mesorhizobium japonicum (strain LMG 29417 / CECT 9101 / MAFF 303099) (Mesorhizobium loti (strain MAFF 303099)) protein is UPF0261 protein mll9388.